Here is a 793-residue protein sequence, read N- to C-terminus: Endonuclease MutS2 (793 aa).

ATP is bound at residue 329-336; the sequence is GPNTGGKT. Residues 611-639 form a disordered region; the sequence is LARARQAVEPTEEEQRARRRGEVPRGLKP. The span at 623-639 shows a compositional bias: basic and acidic residues; the sequence is EEQRARRRGEVPRGLKP. The region spanning 717–792 is the Smr domain; the sequence is VDLRGLMVEE…GDGVTVAKLR (76 aa).

Belongs to the DNA mismatch repair MutS family. MutS2 subfamily. Homodimer. Binds to stalled ribosomes, contacting rRNA.

In terms of biological role, endonuclease that is involved in the suppression of homologous recombination and thus may have a key role in the control of bacterial genetic diversity. Functionally, acts as a ribosome collision sensor, splitting the ribosome into its 2 subunits. Detects stalled/collided 70S ribosomes which it binds and splits by an ATP-hydrolysis driven conformational change. Acts upstream of the ribosome quality control system (RQC), a ribosome-associated complex that mediates the extraction of incompletely synthesized nascent chains from stalled ribosomes and their subsequent degradation. Probably generates substrates for RQC. This chain is Endonuclease MutS2, found in Symbiobacterium thermophilum (strain DSM 24528 / JCM 14929 / IAM 14863 / T).